The primary structure comprises 131 residues: Small ribosomal subunit protein uS12 (131 aa).

Residues 1–32 (MPTFSQLVRKGRTAPRYKTASPALQGSPQRRG) are disordered. Residue Asp89 is modified to 3-methylthioaspartic acid. The tract at residues 110–131 (RKQGRSKYGAKRAKGGAAAGKK) is disordered. Positions 111–131 (KQGRSKYGAKRAKGGAAAGKK) are enriched in basic residues.

Belongs to the universal ribosomal protein uS12 family. Part of the 30S ribosomal subunit. Contacts proteins S8 and S17. May interact with IF1 in the 30S initiation complex.

Its function is as follows. With S4 and S5 plays an important role in translational accuracy. Interacts with and stabilizes bases of the 16S rRNA that are involved in tRNA selection in the A site and with the mRNA backbone. Located at the interface of the 30S and 50S subunits, it traverses the body of the 30S subunit contacting proteins on the other side and probably holding the rRNA structure together. The combined cluster of proteins S8, S12 and S17 appears to hold together the shoulder and platform of the 30S subunit. In Acidobacterium capsulatum (strain ATCC 51196 / DSM 11244 / BCRC 80197 / JCM 7670 / NBRC 15755 / NCIMB 13165 / 161), this protein is Small ribosomal subunit protein uS12.